The following is a 437-amino-acid chain: Methylenetetrahydrofolate--tRNA-(uracil-5-)-methyltransferase TrmFO (437 aa).

10–15 (GAGLAG) provides a ligand contact to FAD.

The protein belongs to the MnmG family. TrmFO subfamily. FAD serves as cofactor.

It is found in the cytoplasm. It catalyses the reaction uridine(54) in tRNA + (6R)-5,10-methylene-5,6,7,8-tetrahydrofolate + NADH + H(+) = 5-methyluridine(54) in tRNA + (6S)-5,6,7,8-tetrahydrofolate + NAD(+). The catalysed reaction is uridine(54) in tRNA + (6R)-5,10-methylene-5,6,7,8-tetrahydrofolate + NADPH + H(+) = 5-methyluridine(54) in tRNA + (6S)-5,6,7,8-tetrahydrofolate + NADP(+). Functionally, catalyzes the folate-dependent formation of 5-methyl-uridine at position 54 (M-5-U54) in all tRNAs. The sequence is that of Methylenetetrahydrofolate--tRNA-(uracil-5-)-methyltransferase TrmFO from Pelotomaculum thermopropionicum (strain DSM 13744 / JCM 10971 / SI).